Reading from the N-terminus, the 126-residue chain is Aspartate 1-decarboxylase (126 aa).

Ser25 serves as the catalytic Schiff-base intermediate with substrate; via pyruvic acid. Ser25 carries the post-translational modification Pyruvic acid (Ser). Substrate is bound at residue Thr57. Tyr58 functions as the Proton donor in the catalytic mechanism. 73 to 75 (GAA) lines the substrate pocket.

It belongs to the PanD family. As to quaternary structure, heterooctamer of four alpha and four beta subunits. The cofactor is pyruvate. In terms of processing, is synthesized initially as an inactive proenzyme, which is activated by self-cleavage at a specific serine bond to produce a beta-subunit with a hydroxyl group at its C-terminus and an alpha-subunit with a pyruvoyl group at its N-terminus.

It localises to the cytoplasm. It carries out the reaction L-aspartate + H(+) = beta-alanine + CO2. The protein operates within cofactor biosynthesis; (R)-pantothenate biosynthesis; beta-alanine from L-aspartate: step 1/1. Its function is as follows. Catalyzes the pyruvoyl-dependent decarboxylation of aspartate to produce beta-alanine. The sequence is that of Aspartate 1-decarboxylase from Marinomonas sp. (strain MWYL1).